Reading from the N-terminus, the 189-residue chain is GMP synthase [glutamine-hydrolyzing] subunit A (189 aa).

Residues 1-189 (MIVILNNGGQ…CKKCGFEFEE (189 aa)) enclose the Glutamine amidotransferase type-1 domain. C76 functions as the Nucleophile in the catalytic mechanism. Catalysis depends on residues H163 and E165.

As to quaternary structure, heterodimer composed of a glutamine amidotransferase subunit (A) and a GMP-binding subunit (B).

It carries out the reaction XMP + L-glutamine + ATP + H2O = GMP + L-glutamate + AMP + diphosphate + 2 H(+). It functions in the pathway purine metabolism; GMP biosynthesis; GMP from XMP (L-Gln route): step 1/1. In terms of biological role, catalyzes the synthesis of GMP from XMP. The chain is GMP synthase [glutamine-hydrolyzing] subunit A from Methanococcus maripaludis (strain C7 / ATCC BAA-1331).